The chain runs to 85 residues: WAP four-disulfide core domain protein 12 (85 aa).

Residues 1 to 21 form the signal peptide; the sequence is MWPNSILVLMTLLISSTLVTG. The region spanning 25-72 is the WAP domain; sequence KGEEKRVCPPDYVRCIRQDDPQCYSDNDCGDQEICCFWQCGFKCVLPV. Cystine bridges form between Cys-32–Cys-60, Cys-39–Cys-64, Cys-47–Cys-59, and Cys-53–Cys-68.

In terms of tissue distribution, constitutively expressed in tongue.

It is found in the secreted. In terms of biological role, antibacterial protein which inhibits the growth of E.coli and S.aureus. Putative acid-stable proteinase inhibitor. This Mus musculus (Mouse) protein is WAP four-disulfide core domain protein 12.